A 755-amino-acid chain; its full sequence is MSTCSSSEIAEKKRIALAKLQAKKSQLLASAPATNGKSTTSATGATQHANNGKSNPNQPQAKSPLNFYRSPTGEQKKINRSGPTPGDNKSSSFLNALKAIKQTSNRELSRGAAHPYQRPNGGNERNKPTLSLSSDKEKPVAVLLGNSITCNLYLISTHRFAAQTSGYHEQLVTVFKNMPTKCYDGQTRIWSFDLSDYQSLKTHAADLKPYVHMNGIPKKVLDLCGQPPVVPERSVLASIEPKLADQLMPFQQDGVCFAIAQKGRIMICDEMGLGKTYQALAVADYFKDDWPLLVCTTASTRDSWAKHIMDLLPKVPIHYVQVLNNNQLYVGEAKVLITSYNMMERHEDKLMQRKFGFIIFDESHTLKNSKAKCTTTAKRLTDQAKRVVLLSGTPALSRPLELFTQLQMIDGKFMNFMEFTTRYCDGKQSTFGWDANGQSNLEELKVILHLKYMLRRTKVEVLPQLAEKNRETVVLDPALVWTNAETKETLDAFNKELKTAKGRATEEILLRFYARTAEVKTRAVCAYLKTLVKEQKKFIIFAHHRVMMDAISDFLSGLKVHYIRIDGQTRSDHRSDSVDTFQKKSSCKVALLSLKACNSGITLTAAEIIVFAELDWNPSTLAQAESRAHRIGQTKPVICRYLIAHNTADDIIWNMLKNKQEVLSKVGIFAENLQKATHTAAPTSSHKIEEYFSPSTSTSLEPERNSIKQYFSTIPAKEPPEQNNNTEMTKVNKAESDIAAFFNDDDDEAFLELDI.

Residues Ser-7–Leu-27 are a coiled coil. Disordered regions lie at residues Gln-26–Ser-91 and Ser-104–Ser-134. Polar residues predominate over residues Pro-32–Ser-63. Residue Ser-63 is modified to Phosphoserine. Residues Pro-139–Pro-217 form the HARP domain. The Helicase ATP-binding domain maps to Cys-256–Lys-412. Asp-269–Thr-276 is an ATP binding site. The DESH box motif lies at Asp-361–His-364. The region spanning Tyr-527–Ala-681 is the Helicase C-terminal domain.

This sequence belongs to the SNF2/RAD54 helicase family. SMARCAL1 subfamily.

It is found in the nucleus. Its function is as follows. ATP-dependent annealing helicase that catalyzes the rewinding of the stably unwound DNA. This is SWI/SNF-related matrix-associated actin-dependent regulator of chromatin subfamily A-like protein 1 (Marcal1) from Drosophila melanogaster (Fruit fly).